A 71-amino-acid polypeptide reads, in one-letter code: Protein PSY2 (71 aa).

An N-terminal signal peptide occupies residues 1–20; it reads MSFGTRLLLFLILTLPLVTS. Residues 21-46 constitute a propeptide that is removed on maturation; it reads SSPNTLHVSGIVKTGTTSRFLMMTIE. Y48 bears the Sulfotyrosine mark. The interval 50–71 is disordered; the sequence is DPSANTRHDPSVPTNAKADTTP. Positions 61–71 are enriched in polar residues; it reads VPTNAKADTTP. P62 bears the 4-hydroxyproline mark. Residue P62 is glycosylated (O-linked (Ara...) hydroxyproline). Positions 65-71 are excised as a propeptide; sequence AKADTTP.

This sequence belongs to the sulfated-peptide plant hormone family. The sulfation and the glycosylation are required for full activity.

The protein resides in the secreted. Its function is as follows. Promotes cellular proliferation and expansion. This Arabidopsis thaliana (Mouse-ear cress) protein is Protein PSY2 (PSY2).